We begin with the raw amino-acid sequence, 213 residues long: Heat shock protein 30C (213 aa).

Positions 61–80 (SKDTEMRRITDQNRQSRESE) are enriched in basic and acidic residues. 2 disordered regions span residues 61–93 (SKDT…GKDH) and 174–213 (ALPP…QKVD). The 113-residue stretch at 76 to 188 (SRESEGTSPN…PETPIPISMD (113 aa)) folds into the sHSP domain.

This sequence belongs to the small heat shock protein (HSP20) family.

The sequence is that of Heat shock protein 30C (hsp30c) from Xenopus laevis (African clawed frog).